A 364-amino-acid chain; its full sequence is Phosphoserine aminotransferase (364 aa).

Arg-46 contributes to the L-glutamate binding site. Residues Ala-80–Arg-81, Trp-106, Thr-157, Asp-176, and Gln-199 contribute to the pyridoxal 5'-phosphate site. Lys-200 carries the N6-(pyridoxal phosphate)lysine modification. Asn-241–Thr-242 provides a ligand contact to pyridoxal 5'-phosphate.

Belongs to the class-V pyridoxal-phosphate-dependent aminotransferase family. SerC subfamily. Homodimer. Pyridoxal 5'-phosphate serves as cofactor.

The protein resides in the cytoplasm. The catalysed reaction is O-phospho-L-serine + 2-oxoglutarate = 3-phosphooxypyruvate + L-glutamate. It carries out the reaction 4-(phosphooxy)-L-threonine + 2-oxoglutarate = (R)-3-hydroxy-2-oxo-4-phosphooxybutanoate + L-glutamate. Its pathway is amino-acid biosynthesis; L-serine biosynthesis; L-serine from 3-phospho-D-glycerate: step 2/3. It participates in cofactor biosynthesis; pyridoxine 5'-phosphate biosynthesis; pyridoxine 5'-phosphate from D-erythrose 4-phosphate: step 3/5. Its function is as follows. Catalyzes the reversible conversion of 3-phosphohydroxypyruvate to phosphoserine and of 3-hydroxy-2-oxo-4-phosphonooxybutanoate to phosphohydroxythreonine. The protein is Phosphoserine aminotransferase of Vibrio cholerae serotype O1 (strain ATCC 39315 / El Tor Inaba N16961).